The sequence spans 429 residues: Oxysterol-binding protein-like protein OBPalpha (429 aa).

This sequence belongs to the OSBP family.

The chain is Oxysterol-binding protein-like protein OBPalpha (OBPALPHA) from Candida albicans (strain SC5314 / ATCC MYA-2876) (Yeast).